The sequence spans 1040 residues: MAAAPALKHWRTTLERVEKFVSPLYFTDCNLRGRLFGASCPVAVLSSFLTPERLPYQEAVQRDFRPAQVGDSFGPTWWTCWFRVELTIPEAWVGQEVHLCWESDGEGLVWRDGEPVQGLTKEGEKTSYVLTDRLGERDPRSLTLYVEVACNGLLGAGKGSMIAAPDPEKMFQLSRAELAVFHRDVHMLLVDLELLLGIAKGLGKDNQRSFQALYTANQMVNVCDPAQPETFPVAQALASRFFGQHGGESQHTIHATGHCHIDTAWLWPFKETVRKCARSWVTALQLMERNPEFIFACSQAQQLEWVKSRYPGLYSRIQEFACRGQFVPVGGTWVEMDGNLPSGEAMVRQFLQGQNFFLQEFGKMCSEFWLPDTFGYSAQLPQIMHGCGIRRFLTQKLSWNLVNSFPHHTFFWEGLDGSRVLVHFPPGDSYGMQGSVEEVLKTVANNRDKGRANHSAFLFGFGDGGGGPTQTMLDRLKRLSNTDGLPRVQLSSPRQLFSALESDSEQLCTWVGELFLELHNGTYTTHAQIKKGNRECERILHDVELLSSLALARSAQFLYPAAQLQHLWRLLLLNQFHDVVTGSCIQMVAEEAMCHYEDIRSHGNTLLSAAAAALCAGEPGPEGLLIVNTLPWKRIEVMALPKPGGAHSLALVTVPSMGYAPVPPPTSLQPLLPQQPVFVVQETDGSVTLDNGIIRVKLDPTGRLTSLVLVASGREAIAEGAVGNQFVLFDDVPLYWDAWDVMDYHLETRKPVLGQAGTLAVGTEGGLRGSAWFLLQISPNSRLSQEVVLDVGCPYVRFHTEVHWHEAHKFLKVEFPARVRSSQATYEIQFGHLQRPTHYNTSWDWARFEVWAHRWMDLSEHGFGLALLNDCKYGASVRGSILSLSLLRAPKAPDATADTGRHEFTYALMPHKGSFQDAGVIQAAYSLNFPLLALPAPSPAPATSWSAFSVSSPAVVLETVKQAESSPQRRSLVLRLYEAHGSHVDCWLHLSLPVQEAILCDLLERPDPAGHLTLRDNRLKLTFSPFQVLSLLLVLQPPPH.

The Co(2+) site is built by histidine 260, aspartate 262, aspartate 372, and histidine 577. Residue aspartate 372 is the Nucleophile of the active site.

Belongs to the glycosyl hydrolase 38 family. The cofactor is Co(2+).

The protein localises to the cytoplasm. It catalyses the reaction Hydrolysis of terminal, non-reducing alpha-D-mannose residues in alpha-D-mannosides.. Strongly inhibited by swainsonine. Also inhibited to a lesser extent by deoxymannojirimycin (DMM). Cleaves alpha 1,2-, alpha 1,3-, and alpha 1,6-linked mannose residues on cytoplasmic free oligosaccharides generated by N-glycoprotein degradation pathways. The protein is Alpha-mannosidase 2C1 (MAN2C1) of Homo sapiens (Human).